We begin with the raw amino-acid sequence, 678 residues long: GAS2-like protein 1 (678 aa).

Ala2 is subject to N-acetylalanine. In terms of domain architecture, Calponin-homology (CH) spans 27 to 148; it reads EAMKEDLADW…CLLEVARRGA (122 aa). The 73-residue stretch at 203–275 folds into the GAR domain; that stretch reads NDLRNLDELV…HYLDKHDPCR (73 aa). A compositionally biased stretch (polar residues) spans 276-291; that stretch reads CSSSTHRLPQQRTGTF. Disordered regions lie at residues 276-524 and 538-678; these read CSSS…FRRL and AASH…DSSM. Ser306 and Ser316 each carry phosphoserine. The span at 327–340 shows a compositional bias: basic and acidic residues; the sequence is GTKEGPETPLRPRD. Thr334 bears the Phosphothreonine mark. Ser352 and Ser355 each carry phosphoserine. Positions 354-365 are enriched in low complexity; it reads DSDSSASSAQSG. Over residues 370 to 381 the composition is skewed to basic and acidic residues; that stretch reads RSDDSATGSRRE. Low complexity predominate over residues 392–403; sequence PASPRRPTAPRS. Ser394 carries the post-translational modification Phosphoserine. Basic and acidic residues predominate over residues 404 to 413; it reads QSRDRLDRGR. Residues Ser436 and Ser438 each carry the phosphoserine modification. The segment covering 437–454 has biased composition (basic and acidic residues); sequence QSREEQAVLMVRRDRDGQ. Residues 461-471 show a composition bias toward gly residues; it reads GRGGGGSGGSG. Phosphoserine occurs at positions 482 and 489. Positions 485–495 are enriched in pro residues; it reads APRPSRGPSPG. Arg490 is subject to Omega-N-methylarginine. Ser493 is modified (phosphoserine). Thr501 carries the phosphothreonine modification. Residue Arg507 is modified to Omega-N-methylarginine. Composition is skewed to low complexity over residues 509–519 and 554–568; these read PLQLDPQQEQQ and DSAY…SSLS. Arg630 carries the post-translational modification Omega-N-methylarginine. The segment covering 631–641 has biased composition (basic and acidic residues); that stretch reads GRMDTQPDRKP. Ser654 carries the phosphoserine modification. Polar residues predominate over residues 666-678; that stretch reads HSVTPRTEPDSSM.

This sequence belongs to the GAS2 family. In terms of assembly, interacts with MAPRE1.

It is found in the cytoplasm. The protein localises to the cytoskeleton. The protein resides in the stress fiber. Seems to be involved in the cross-linking of microtubules and microfilaments. Regulates microtubule dynamics and stability by interacting with microtubule plus-end tracking proteins, such as MAPRE1, to regulate microtubule growth along actin stress fibers. In Mus musculus (Mouse), this protein is GAS2-like protein 1 (Gas2l1).